We begin with the raw amino-acid sequence, 634 residues long: Ankyrin repeat protein OPG025 (634 aa).

6 ANK repeats span residues 36–69 (DGET…YKNI), 70–100 (NDFD…EINS), 103–134 (NGIN…PTCS), 175–211 (MGKT…EMRY), 307–337 (IQDL…TLYR), and 412–441 (HGCS…DINI).

This sequence belongs to the orthopoxvirus OPG025 family. Interacts with components of host SCF complex CUL1 and SKP1 and components of the cullin deneddylation/COP9 signalosome complex subunits COPS7A and COPS7B.

Functionally, plays a role in the inhibition of host immune repsonse by counteracting the action of interferons on early events in the viral replication cycle. The chain is Ankyrin repeat protein OPG025 (OPG035) from Vaccinia virus (strain Western Reserve) (VACV).